The sequence spans 1377 residues: DNA-directed RNA polymerase subunit beta (1377 aa).

Belongs to the RNA polymerase beta chain family. As to quaternary structure, the RNAP catalytic core consists of 2 alpha, 1 beta, 1 beta' and 1 omega subunit. When a sigma factor is associated with the core the holoenzyme is formed, which can initiate transcription.

It catalyses the reaction RNA(n) + a ribonucleoside 5'-triphosphate = RNA(n+1) + diphosphate. Functionally, DNA-dependent RNA polymerase catalyzes the transcription of DNA into RNA using the four ribonucleoside triphosphates as substrates. The sequence is that of DNA-directed RNA polymerase subunit beta from Brucella canis (strain ATCC 23365 / NCTC 10854 / RM-666).